The following is a 563-amino-acid chain: Calnexin homolog (563 aa).

The signal sequence occupies residues 1–23 (MRFNAAITGALVSSATLMGQAHA). At 24 to 493 (EETEKKADAT…PINAVKQVPE (470 aa)) the chain is on the lumenal side. Position 98 (Asp98) interacts with Ca(2+). Cys141 and Cys175 are disulfide-bonded. 4 residues coordinate an alpha-D-glucoside: Tyr145, Lys147, Tyr166, and Asp173. N-linked (GlcNAc...) asparagine glycosylation is present at Asn236. The tract at residues 241 to 323 (EDFAPPVNPE…EKPEDWDDEE (83 aa)) is disordered. The span at 249 to 279 (PEKEIDDPKDKKPADWVDEAKIPDPEAKKPD) shows a compositional bias: basic and acidic residues. Residues 253–386 (IDDPKDKKPA…RKIPNPAYFE (134 aa)) are p domain (Extended arm). Over residues 280 to 305 (DWDEDAPYEIVDEEATMPEDWLEDEP) the composition is skewed to acidic residues. A disulfide bridge links Cys337 with Cys343. Residue Glu402 coordinates an alpha-D-glucoside. Asp413 contributes to the Ca(2+) binding site. The helical transmembrane segment at 494–514 (VAGGLGALLLTMILVIVGAVG) threads the bilayer. Residues 515 to 563 (ASSPAPAAAAKKGKEAASAAKEKASEAVSSAADTAKGAATKRNTRSSAQ) lie on the Cytoplasmic side of the membrane. The segment at 521-563 (AAAAKKGKEAASAAKEKASEAVSSAADTAKGAATKRNTRSSAQ) is disordered. The span at 526 to 539 (KGKEAASAAKEKAS) shows a compositional bias: basic and acidic residues.

The protein belongs to the calreticulin family.

It localises to the endoplasmic reticulum membrane. Interacts with newly synthesized monoglucosylated glycoproteins in the endoplasmic reticulum. It may act in assisting protein assembly and/or in the retention within the ER of unassembled protein subunits. It seems to play a major role in the quality control apparatus of the ER by the retention of incorrectly folded proteins. The chain is Calnexin homolog from Aspergillus fumigatus (strain ATCC MYA-4609 / CBS 101355 / FGSC A1100 / Af293) (Neosartorya fumigata).